The chain runs to 76 residues: Bowman-Birk type proteinase inhibitor DE-4 (76 aa).

7 disulfides stabilise this stretch: Cys15–Cys69, Cys16–Cys31, Cys19–Cys65, Cys21–Cys29, Cys39–Cys46, Cys43–Cys58, and Cys48–Cys56.

This sequence belongs to the Bowman-Birk serine protease inhibitor family.

The sequence is that of Bowman-Birk type proteinase inhibitor DE-4 from Macrotyloma axillare (Perennial horse gram).